The sequence spans 618 residues: Vacuolar-sorting receptor 5 (618 aa).

The N-terminal stretch at 1 to 23 (MSPSNKGTVLALILALTMVVVNG) is a signal peptide. Topologically, residues 24 to 563 (FSSRFFVEKS…IERRSGSRSR (540 aa)) are lumenal. One can recognise a PA domain in the interval 58 to 164 (KYGGFMIGSV…SFGDSLKKAL (107 aa)). 3 N-linked (GlcNAc...) asparagine glycosylation sites follow: Asn81, Asn293, and Asn430. 2 EGF-like domains span residues 412–462 (ETNE…TSCK) and 465–511 (GPAR…LKCE). Disulfide bonds link Cys416–Cys434, Cys423–Cys443, Cys445–Cys461, Cys469–Cys489, Cys476–Cys497, Cys499–Cys510, and Cys540–Cys553. The region spanning 512–554 (DIDECKEKSACKCDGCKCKNNWGGYECKCSNNSIYMKEEDTCI) is the EGF-like 3; calcium-binding domain. The N-linked (GlcNAc...) asparagine glycan is linked to Asn542. A helical membrane pass occupies residues 564–584 (GLFTIVVLTAIAGISLGAYIF). Topologically, residues 585–618 (YKYHLQSYMDSEIVSIMSQYIPLDSQSINQDSFK) are cytoplasmic. A Tyrosine-based internalization motif motif is present at residues 604–607 (YIPL).

The protein belongs to the VSR (BP-80) family. Expressed in seedlings, roots, leaves, flowers and siliques.

The protein localises to the membrane. The protein resides in the golgi apparatus membrane. It localises to the cytoplasmic vesicle. It is found in the clathrin-coated vesicle membrane. Its subcellular location is the prevacuolar compartment membrane. In terms of biological role, vacuolar-sorting receptor (VSR) involved in clathrin-coated vesicles sorting from Golgi apparatus to vacuoles. This Arabidopsis thaliana (Mouse-ear cress) protein is Vacuolar-sorting receptor 5 (VSR5).